Here is a 159-residue protein sequence, read N- to C-terminus: Small ribosomal subunit protein uS4 (159 aa).

The S4 RNA-binding domain occupies 106 to 158 (RRLQTIVYRMGLAKSIYHARQLIVHGHIAVAGRRVSSPGFLVPRELEDKISLI).

This sequence belongs to the universal ribosomal protein uS4 family. Part of the 30S ribosomal subunit. Contacts protein S5. The interaction surface between S4 and S5 is involved in control of translational fidelity.

Functionally, one of the primary rRNA binding proteins, it binds directly to 16S rRNA where it nucleates assembly of the body of the 30S subunit. In terms of biological role, with S5 and S12 plays an important role in translational accuracy. In Pyrobaculum neutrophilum (strain DSM 2338 / JCM 9278 / NBRC 100436 / V24Sta) (Thermoproteus neutrophilus), this protein is Small ribosomal subunit protein uS4.